Consider the following 404-residue polypeptide: Tryptophan synthase beta chain (404 aa).

K94 bears the N6-(pyridoxal phosphate)lysine mark.

It belongs to the TrpB family. As to quaternary structure, tetramer of two alpha and two beta chains. Requires pyridoxal 5'-phosphate as cofactor.

It catalyses the reaction (1S,2R)-1-C-(indol-3-yl)glycerol 3-phosphate + L-serine = D-glyceraldehyde 3-phosphate + L-tryptophan + H2O. It participates in amino-acid biosynthesis; L-tryptophan biosynthesis; L-tryptophan from chorismate: step 5/5. Functionally, the beta subunit is responsible for the synthesis of L-tryptophan from indole and L-serine. The sequence is that of Tryptophan synthase beta chain from Staphylococcus aureus (strain bovine RF122 / ET3-1).